The primary structure comprises 161 residues: 3-isopropylmalate dehydratase small subunit (161 aa).

The protein belongs to the LeuD family. LeuD type 2 subfamily. As to quaternary structure, heterodimer of LeuC and LeuD.

The catalysed reaction is (2R,3S)-3-isopropylmalate = (2S)-2-isopropylmalate. The protein operates within amino-acid biosynthesis; L-leucine biosynthesis; L-leucine from 3-methyl-2-oxobutanoate: step 2/4. Functionally, catalyzes the isomerization between 2-isopropylmalate and 3-isopropylmalate, via the formation of 2-isopropylmaleate. This Clostridium botulinum (strain Eklund 17B / Type B) protein is 3-isopropylmalate dehydratase small subunit.